We begin with the raw amino-acid sequence, 287 residues long: ATP synthase gamma chain (287 aa).

The protein belongs to the ATPase gamma chain family. As to quaternary structure, F-type ATPases have 2 components, CF(1) - the catalytic core - and CF(0) - the membrane proton channel. CF(1) has five subunits: alpha(3), beta(3), gamma(1), delta(1), epsilon(1). CF(0) has three main subunits: a, b and c.

The protein resides in the cell inner membrane. In terms of biological role, produces ATP from ADP in the presence of a proton gradient across the membrane. The gamma chain is believed to be important in regulating ATPase activity and the flow of protons through the CF(0) complex. This chain is ATP synthase gamma chain, found in Geotalea uraniireducens (strain Rf4) (Geobacter uraniireducens).